A 227-amino-acid polypeptide reads, in one-letter code: Probable N-acetyltransferase family 8 member 5 (227 aa).

A run of 3 helical transmembrane segments spans residues I29–M49, I53–L73, and I201–S221. Residues F69 to I213 enclose the N-acetyltransferase domain.

It belongs to the camello family.

Its subcellular location is the membrane. May play a role in regulation of gastrulation. This Mus musculus (Mouse) protein is Probable N-acetyltransferase family 8 member 5.